Consider the following 212-residue polypeptide: Outer surface protein C (212 aa).

An N-terminal signal peptide occupies residues 1 to 18 (MKKNTLSAILMTLFLFIS). Cys19 is lipidated: N-palmitoyl cysteine. Cys19 carries the S-diacylglycerol cysteine lipid modification.

This sequence belongs to the OspC lipoprotein family. Homodimer. Interacts with tick Ixodes ricinus salivary protein Iric-1. Binds human (host) plasminogen. Post-translationally, the N-terminus is blocked.

It is found in the cell outer membrane. The protein localises to the cell surface. In terms of biological role, major immunodominant protein in mammalian hosts. Required for initial stages of mammalian infection. Inhibits macrophage-mediated phagocytosis of the bacteria. Binds human plasminogen; this probably confers an extracellular protease activity on the bacteria that allows it to traverse tissue. Unlike closely related strain B31, its interaction with Ixodes ricinus salivary protein Iric-1 does not protect against antibody-mediated destruction in vitro. This chain is Outer surface protein C, found in Borreliella afzelii (strain PKo) (Borrelia afzelii).